Here is a 100-residue protein sequence, read N- to C-terminus: Large ribosomal subunit protein eL30 (100 aa).

This sequence belongs to the eukaryotic ribosomal protein eL30 family.

This is Large ribosomal subunit protein eL30 (rpl30e) from Aeropyrum pernix (strain ATCC 700893 / DSM 11879 / JCM 9820 / NBRC 100138 / K1).